Here is a 115-residue protein sequence, read N- to C-terminus: MSRLKFVRVGLPFFAIVLGSAYGLHFFQQVRFDFRKIKQEDDNLELLRSDLTRSGLRLREGVTVESVYKEVAELDTDNWENIRGPRDTEDLTDYNLIKKQQQEASRKVRELKSNV.

The Mitochondrial matrix portion of the chain corresponds to 1–6 (MSRLKF). A helical membrane pass occupies residues 7–29 (VRVGLPFFAIVLGSAYGLHFFQQ). Residues 30 to 115 (VRFDFRKIKQ…RKVRELKSNV (86 aa)) are Mitochondrial intermembrane-facing.

The protein belongs to the COX16 family.

Its subcellular location is the mitochondrion inner membrane. Its function is as follows. Required for the assembly of the mitochondrial respiratory chain complex IV (CIV), also known as cytochrome c oxidase. The sequence is that of Cytochrome c oxidase assembly protein COX16 homolog, mitochondrial from Caenorhabditis elegans.